The sequence spans 1220 residues: Osmosensing histidine protein kinase SLN1 (1220 aa).

Residues 1 to 22 (MRFGLPSKLELTPPFRIGIRTQ) are Cytoplasmic-facing. The chain crosses the membrane as a helical span at residues 23–46 (LTALVSIVALGSLIILAVTTGVYF). The Extracellular segment spans residues 47 to 333 (TSNYKNLRSD…FLSPATKLAK (287 aa)). Residues N100, N138, N142, N181, N224, and N272 are each glycosylated (N-linked (GlcNAc...) asparagine). A helical transmembrane segment spans residues 334–354 (IITGTVIAIGVFVILLTLPLA). Topologically, residues 355–1220 (HWAVQPIVRL…AAYQGKKNNK (866 aa)) are cytoplasmic. Disordered stretches follow at residues 414-433 (GSTT…GAAF) and 444-500 (NLGN…HILT). Positions 451–468 (SPPEEENKIPNNHTDAKI) are enriched in basic and acidic residues. S502 carries the phosphoserine modification. The Histidine kinase domain occupies 573-928 (NISHELRTPL…KFTFTLPLNQ (356 aa)). H576 bears the Phosphohistidine; by autocatalysis mark. Residues S758 and S833 each carry the phosphoserine modification. 2 disordered regions span residues 960–1016 (AKSI…DNGG) and 1040–1081 (NSLS…VKDD). The span at 965 to 984 (SRQSTSSVATPATNRSSLTN) shows a compositional bias: polar residues. The segment covering 988–1000 (PEVRSKGKHETKD) has biased composition (basic and acidic residues). Residues S1041 and S1044 each carry the phosphoserine modification. Residues 1063 to 1075 (LQSTGTATSSRNI) are compositionally biased toward polar residues. The Response regulatory domain maps to 1089–1210 (KILVVEDNHV…KLKTILTEFC (122 aa)). Residues E1094, D1095, D1144, and K1195 each coordinate Mg(2+). D1144 bears the 4-aspartylphosphate mark.

In terms of assembly, interacts with DJP1, MOG1 and YPD1. The phosphorelay mechanism involves the sequential transfer of a phosphate group from His-576 (H1) in the histidine kinase domain (transmitter domain) to Asp-1144 (D1) of the response regulatory domain (receiver domain). This transfer probably occurs between two SLN1 molecules, rather than intramolecularly. The phosphate group is further transferred to 'His-64' (H2) of YPD1 and finally to 'Asp-554' (D2) of SSK1 or 'Asp-427' (D2) of SKN7.

Its subcellular location is the cell membrane. It catalyses the reaction ATP + protein L-histidine = ADP + protein N-phospho-L-histidine.. Histidine kinase that acts as an osmosensor at the plasma membrane. Part of the bifurcated SLN1-YPD1-SKN7/SSK1 two-component regulatory system, which controls activity of the HOG1 pathway and gene expression in response to changes in the osmolarity of the extracellular environment. Under normal osmotic conditions, the histidine kinase autophosphorylates His-576. This phosphate is subsequently transferred to Asp-1144, from where it is relayed to 'His-64' of the phosphorelay intermediate protein YPD1. Under high osmolarity conditions, the histidine kinase is no longer active. The chain is Osmosensing histidine protein kinase SLN1 (SLN1) from Saccharomyces cerevisiae (strain ATCC 204508 / S288c) (Baker's yeast).